The sequence spans 56 residues: Ovomucoid (56 aa).

One can recognise a Kazal-like domain in the interval 6 to 56; the sequence is VDCSDHPKPACLQEQKPLCGSDNKTYDNKCSFCNAVVDSNGTLTLSHFGKC. Cystine bridges form between C8-C38, C16-C35, and C24-C56. N-linked (GlcNAc...) asparagine glycosylation is present at N45.

The protein resides in the secreted. This Penelope jacquacu (Spix's guan) protein is Ovomucoid.